The primary structure comprises 91 residues: Islet amyloid polypeptide (91 aa).

An N-terminal signal peptide occupies residues 1 to 22 (MGILKLPVVLIVLCVALNHLEG). A propeptide spanning residues 23-33 (GGKPTESHQME) is cleaved from the precursor. A disulfide bond links cysteine 37 and cysteine 42. Tyrosine 72 is subject to Tyrosine amide. A propeptide spanning residues 78–91 (VEILKREPLSYLPI) is cleaved from the precursor.

The protein belongs to the calcitonin family. Can form homodimers. Interacts with IDE and INS. Interaction with INS inhibits homodimerization and fibril formation.

Its subcellular location is the secreted. Functionally, amylin/IAPP is a glucoregulatory peptide hormone that plays an important role in the regulation of energy homeostasis. Selectively inhibits insulin-stimulated glucose utilization and glycogen deposition in muscle, while not affecting adipocyte glucose metabolism. IAPP function is mediated by the CALCR-RAMPs (AMYRs) receptor complexes. Amylin can also bind CALCR receptor in the absence of RAMPs, although it is more selective for AMYRs. The sequence is that of Islet amyloid polypeptide (IAPP) from Bos taurus (Bovine).